The sequence spans 163 residues: Phosphopantetheine adenylyltransferase (163 aa).

Thr-11 is a substrate binding site. ATP-binding positions include 11 to 12 and His-19; that span reads TF. Residues Lys-43, Leu-75, and Arg-89 each coordinate substrate. ATP contacts are provided by residues 90–92, Glu-100, and 125–131; these read GLR and YMFISAT.

The protein belongs to the bacterial CoaD family. In terms of assembly, homohexamer. Mg(2+) serves as cofactor.

It is found in the cytoplasm. The enzyme catalyses (R)-4'-phosphopantetheine + ATP + H(+) = 3'-dephospho-CoA + diphosphate. Its pathway is cofactor biosynthesis; coenzyme A biosynthesis; CoA from (R)-pantothenate: step 4/5. Functionally, reversibly transfers an adenylyl group from ATP to 4'-phosphopantetheine, yielding dephospho-CoA (dPCoA) and pyrophosphate. This chain is Phosphopantetheine adenylyltransferase, found in Azoarcus sp. (strain BH72).